Consider the following 486-residue polypeptide: Ammonium transporter 2 member 1 (486 aa).

The next 11 membrane-spanning stretches (helical) occupy residues A29 to V49, S57 to F77, L127 to L147, L161 to Y181, G190 to G210, I225 to G245, I252 to W272, V285 to L305, W309 to L329, L343 to L363, and F399 to I419. Residues R454–A470 are compositionally biased toward basic and acidic residues. The tract at residues R454–R473 is disordered.

It belongs to the ammonia transporter channel (TC 1.A.11.2) family. Expressed in roots and leaf blades and sheaths.

It localises to the cell membrane. In terms of biological role, involved in ammonium transport. The chain is Ammonium transporter 2 member 1 (AMT2-1) from Oryza sativa subsp. japonica (Rice).